The primary structure comprises 303 residues: MDLRFSEEVRRALEAGQPLVALETSVVAQGLPYPDNLAAARACEEAIRRAGAVPAATAIIDGQLCVGLEEPEMRRLAEGKERLLKVASRDFAVAMATRATGGTTVSATCEMAAAAGIRVFSTGGIGGVHRGASEHFDISQDIAALARFPVAVVCAGAKSVLDLPKTMELLETAGVPVIGVGTDELPSFYSRGSGIPLEHRADDVDTAARIARARFESLKQGGVLYTVPPPEETSLPRNEVELHIAATLADADRQGIRGKAVTPFLLSEMAKRTGGKTLKANLALLTNNARFAGQLAVAYARAS.

Glu-23 acts as the Proton donor in catalysis. Substrate-binding residues include Lys-85 and Val-105. Residue Asp-137 participates in Mn(2+) binding. Residue 139–141 (SQD) coordinates substrate. Residue Lys-158 is the Nucleophile of the active site.

This sequence belongs to the pseudouridine-5'-phosphate glycosidase family. As to quaternary structure, homotrimer. Mn(2+) is required as a cofactor.

The catalysed reaction is D-ribose 5-phosphate + uracil = psi-UMP + H2O. Catalyzes the reversible cleavage of pseudouridine 5'-phosphate (PsiMP) to ribose 5-phosphate and uracil. Functions biologically in the cleavage direction, as part of a pseudouridine degradation pathway. The protein is Pseudouridine-5'-phosphate glycosidase of Myxococcus xanthus (strain DK1622).